The following is a 175-amino-acid chain: Macro domain-containing protein TTE0995 (175 aa).

In terms of domain architecture, Macro spans M1 to D174.

This sequence belongs to the MacroD-type family.

The sequence is that of Macro domain-containing protein TTE0995 from Caldanaerobacter subterraneus subsp. tengcongensis (strain DSM 15242 / JCM 11007 / NBRC 100824 / MB4) (Thermoanaerobacter tengcongensis).